The primary structure comprises 831 residues: Prolactin receptor (831 aa).

Positions 1–23 are cleaved as a signal peptide; the sequence is MKQDLISSVQIILFLPLTTVGLA. The Extracellular segment spans residues 24 to 438; it reads GQSFPGKPKI…QIPNDFRVKD (415 aa). 4 consecutive Fibronectin type-III domains span residues 30–128, 129–227, 230–331, and 332–433; these read KPKI…VQPG, SPVN…IPSG, PPEK…VQPD, and PPVN…IPND. Cys-36 and Cys-46 are joined by a disulfide. N-linked (GlcNAc...) asparagine glycosylation occurs at Asn-59. Cys-75 and Cys-86 are disulfide-bonded. Asn-91, Asn-100, Asn-112, Asn-132, Asn-262, Asn-303, Asn-315, and Asn-335 each carry an N-linked (GlcNAc...) asparagine glycan. Zn(2+) contacts are provided by Asp-414 and His-416. The WSXWS motif motif lies at 419-423; the sequence is WSEWS. Residues 439–459 form a helical membrane-spanning segment; it reads MIVWIVLGVLSSLICLIMSWT. Over 460 to 831 the chain is Cytoplasmic; it reads MVLKGYRMIT…DPSSFMPSFK (372 aa). The short motif at 471 to 479 is the Box 1 motif element; the sequence is MLPPVPGPK. Disordered regions lie at residues 527–563, 774–796, and 808–831; these read QQLM…SPSL, RVPH…QQGQ, and PSDC…PSFK. Polar residues predominate over residues 787–796; that stretch reads ETSQSLQQGQ.

This sequence belongs to the type I cytokine receptor family. Type 1 subfamily.

The protein localises to the membrane. This is a receptor for the anterior pituitary hormone prolactin. The sequence is that of Prolactin receptor (PRLR) from Gallus gallus (Chicken).